The following is a 495-amino-acid chain: Transcription termination/antitermination protein NusA (495 aa).

The 66-residue stretch at 135–200 folds into the S1 motif domain; the sequence is GKIVTGTVKK…KTAQLFVTRS (66 aa). In terms of domain architecture, KH spans 302 to 374; the sequence is NHSMDIAVEA…LDEEFAQILV (73 aa).

This sequence belongs to the NusA family. In terms of assembly, monomer. Binds directly to the core enzyme of the DNA-dependent RNA polymerase and to nascent RNA.

It localises to the cytoplasm. In terms of biological role, participates in both transcription termination and antitermination. The protein is Transcription termination/antitermination protein NusA of Haemophilus influenzae (strain ATCC 51907 / DSM 11121 / KW20 / Rd).